The primary structure comprises 238 residues: Ribonuclease PH (238 aa).

The interval 67–87 (PRSTHTRSDREAARGKQSGRT) is disordered. Phosphate contacts are provided by residues Arg-86 and 124–126 (GTR).

The protein belongs to the RNase PH family. Homohexameric ring arranged as a trimer of dimers.

The enzyme catalyses tRNA(n+1) + phosphate = tRNA(n) + a ribonucleoside 5'-diphosphate. Its function is as follows. Phosphorolytic 3'-5' exoribonuclease that plays an important role in tRNA 3'-end maturation. Removes nucleotide residues following the 3'-CCA terminus of tRNAs; can also add nucleotides to the ends of RNA molecules by using nucleoside diphosphates as substrates, but this may not be physiologically important. Probably plays a role in initiation of 16S rRNA degradation (leading to ribosome degradation) during starvation. In Ralstonia nicotianae (strain ATCC BAA-1114 / GMI1000) (Ralstonia solanacearum), this protein is Ribonuclease PH.